The primary structure comprises 507 residues: ATP synthase subunit alpha, chloroplastic (507 aa).

170–177 (GDRQTGKA) contacts ATP.

Belongs to the ATPase alpha/beta chains family. In terms of assembly, F-type ATPases have 2 components, CF(1) - the catalytic core - and CF(0) - the membrane proton channel. CF(1) has five subunits: alpha(3), beta(3), gamma(1), delta(1), epsilon(1). CF(0) has four main subunits: a, b, b' and c.

The protein resides in the plastid. It localises to the chloroplast thylakoid membrane. It catalyses the reaction ATP + H2O + 4 H(+)(in) = ADP + phosphate + 5 H(+)(out). Its function is as follows. Produces ATP from ADP in the presence of a proton gradient across the membrane. The alpha chain is a regulatory subunit. The polypeptide is ATP synthase subunit alpha, chloroplastic (Calycanthus floridus var. glaucus (Eastern sweetshrub)).